The primary structure comprises 281 residues: Nucleotide-binding protein Noc_2797 (281 aa).

8–15 (GVSGSGKS) is a binding site for ATP. Position 58-61 (58-61 (DARN)) interacts with GTP.

It belongs to the RapZ-like family.

Functionally, displays ATPase and GTPase activities. The protein is Nucleotide-binding protein Noc_2797 of Nitrosococcus oceani (strain ATCC 19707 / BCRC 17464 / JCM 30415 / NCIMB 11848 / C-107).